Reading from the N-terminus, the 595-residue chain is Aspartate--tRNA(Asp/Asn) ligase (595 aa).

Glu175 is a binding site for L-aspartate. Residues Gln199 to Lys202 are aspartate. The L-aspartate site is built by Arg221 and His454. Arg221–Glu223 contributes to the ATP binding site. Glu488 serves as a coordination point for ATP. Arg495 serves as a coordination point for L-aspartate. Gly540–Arg543 contributes to the ATP binding site.

This sequence belongs to the class-II aminoacyl-tRNA synthetase family. Type 1 subfamily. Homodimer.

It is found in the cytoplasm. The catalysed reaction is tRNA(Asx) + L-aspartate + ATP = L-aspartyl-tRNA(Asx) + AMP + diphosphate. In terms of biological role, aspartyl-tRNA synthetase with relaxed tRNA specificity since it is able to aspartylate not only its cognate tRNA(Asp) but also tRNA(Asn). Reaction proceeds in two steps: L-aspartate is first activated by ATP to form Asp-AMP and then transferred to the acceptor end of tRNA(Asp/Asn). In Brucella anthropi (strain ATCC 49188 / DSM 6882 / CCUG 24695 / JCM 21032 / LMG 3331 / NBRC 15819 / NCTC 12168 / Alc 37) (Ochrobactrum anthropi), this protein is Aspartate--tRNA(Asp/Asn) ligase.